A 118-amino-acid polypeptide reads, in one-letter code: Large ribosomal subunit protein bL20 (118 aa).

The protein belongs to the bacterial ribosomal protein bL20 family.

Functionally, binds directly to 23S ribosomal RNA and is necessary for the in vitro assembly process of the 50S ribosomal subunit. It is not involved in the protein synthesizing functions of that subunit. The chain is Large ribosomal subunit protein bL20 from Ectopseudomonas mendocina (strain ymp) (Pseudomonas mendocina).